The chain runs to 508 residues: Prenylcysteine oxidase 1 (508 aa).

An N-terminal signal peptide occupies residues 1–31; it reads MDPAAPGLACSILRLGLGLLLLCSWWYPGSA. Residues Asn199, Asn291, and Asn356 are each glycosylated (N-linked (GlcNAc...) asparagine).

The protein belongs to the prenylcysteine oxidase family. FAD is required as a cofactor.

The protein resides in the lysosome. It catalyses the reaction an S-polyprenyl-L-cysteine + O2 + H2O = a polyprenal + L-cysteine + H2O2. It carries out the reaction S-(2E,6E)-farnesyl-L-cysteine + O2 + H2O = (2E,6E)-farnesal + L-cysteine + H2O2. The catalysed reaction is [(2E,6E,10E)-geranylgeranyl]-L-cysteine + O2 + H2O = (2E,6E,10E)-geranylgeranial + L-cysteine + H2O2. Prenylcysteine oxidase that cleaves the thioether bond of prenyl-L-cysteines, such as farnesylcysteine and geranylgeranylcysteine. Only active against free prenylcysteines and not prenylcysteine residues within prenylated proteins or peptides. Involved in the final step in the degradation of prenylated proteins, by degrading prenylcysteines after the protein has been degraded. This chain is Prenylcysteine oxidase 1, found in Bos taurus (Bovine).